We begin with the raw amino-acid sequence, 388 residues long: 8-amino-7-oxononanoate synthase (388 aa).

Position 20 (R20) interacts with substrate. 107–108 serves as a coordination point for pyridoxal 5'-phosphate; the sequence is GY. Position 132 (H132) interacts with substrate. The pyridoxal 5'-phosphate site is built by S178, H206, and T237. An N6-(pyridoxal phosphate)lysine modification is found at K240. T356 lines the substrate pocket.

This sequence belongs to the class-II pyridoxal-phosphate-dependent aminotransferase family. BioF subfamily. In terms of assembly, homodimer. It depends on pyridoxal 5'-phosphate as a cofactor.

The enzyme catalyses 6-carboxyhexanoyl-[ACP] + L-alanine + H(+) = (8S)-8-amino-7-oxononanoate + holo-[ACP] + CO2. It participates in cofactor biosynthesis; biotin biosynthesis. In terms of biological role, catalyzes the decarboxylative condensation of pimeloyl-[acyl-carrier protein] and L-alanine to produce 8-amino-7-oxononanoate (AON), [acyl-carrier protein], and carbon dioxide. This is 8-amino-7-oxononanoate synthase from Herminiimonas arsenicoxydans.